Consider the following 341-residue polypeptide: Probable dual-specificity RNA methyltransferase RlmN (341 aa).

The Proton acceptor role is filled by glutamate 88. One can recognise a Radical SAM core domain in the interval 94–314 (EGDRATLCIS…ESHGFTCTIR (221 aa)). Cysteine 101 and cysteine 325 are oxidised to a cystine. Residues cysteine 108, cysteine 112, and cysteine 115 each coordinate [4Fe-4S] cluster. S-adenosyl-L-methionine-binding positions include 153–154 (GE), serine 185, 206–208 (SLH), and histidine 282. Cysteine 325 functions as the S-methylcysteine intermediate in the catalytic mechanism.

It belongs to the radical SAM superfamily. RlmN family. The cofactor is [4Fe-4S] cluster.

It is found in the cytoplasm. The enzyme catalyses adenosine(2503) in 23S rRNA + 2 reduced [2Fe-2S]-[ferredoxin] + 2 S-adenosyl-L-methionine = 2-methyladenosine(2503) in 23S rRNA + 5'-deoxyadenosine + L-methionine + 2 oxidized [2Fe-2S]-[ferredoxin] + S-adenosyl-L-homocysteine. The catalysed reaction is adenosine(37) in tRNA + 2 reduced [2Fe-2S]-[ferredoxin] + 2 S-adenosyl-L-methionine = 2-methyladenosine(37) in tRNA + 5'-deoxyadenosine + L-methionine + 2 oxidized [2Fe-2S]-[ferredoxin] + S-adenosyl-L-homocysteine. Specifically methylates position 2 of adenine 2503 in 23S rRNA and position 2 of adenine 37 in tRNAs. This is Probable dual-specificity RNA methyltransferase RlmN from Porphyromonas gingivalis (strain ATCC BAA-308 / W83).